The sequence spans 203 residues: Small ribosomal subunit protein uS5 (203 aa).

The S5 DRBM domain maps to 51-114 (LEDEVLDITM…ENAKLNVVRI (64 aa)).

Belongs to the universal ribosomal protein uS5 family. As to quaternary structure, part of the 30S ribosomal subunit. Contacts protein S4.

With S4 and S12 plays an important role in translational accuracy. The sequence is that of Small ribosomal subunit protein uS5 from Methanothrix thermoacetophila (strain DSM 6194 / JCM 14653 / NBRC 101360 / PT) (Methanosaeta thermophila).